The sequence spans 179 residues: Large ribosomal subunit protein uL5 (179 aa).

This sequence belongs to the universal ribosomal protein uL5 family. As to quaternary structure, part of the 50S ribosomal subunit; part of the 5S rRNA/L5/L18/L25 subcomplex. Contacts the 5S rRNA and the P site tRNA. Forms a bridge to the 30S subunit in the 70S ribosome.

In terms of biological role, this is one of the proteins that bind and probably mediate the attachment of the 5S RNA into the large ribosomal subunit, where it forms part of the central protuberance. In the 70S ribosome it contacts protein S13 of the 30S subunit (bridge B1b), connecting the 2 subunits; this bridge is implicated in subunit movement. Contacts the P site tRNA; the 5S rRNA and some of its associated proteins might help stabilize positioning of ribosome-bound tRNAs. The chain is Large ribosomal subunit protein uL5 from Herpetosiphon aurantiacus (strain ATCC 23779 / DSM 785 / 114-95).